Reading from the N-terminus, the 699-residue chain is Elongation factor G (699 aa).

One can recognise a tr-type G domain in the interval 8–288 (EDYRNFGIMA…AVCEYLPSPL (281 aa)). Residues 17–24 (AHIDAGKT), 86–90 (DTPGH), and 140–143 (NKMD) contribute to the GTP site.

It belongs to the TRAFAC class translation factor GTPase superfamily. Classic translation factor GTPase family. EF-G/EF-2 subfamily.

It is found in the cytoplasm. Its function is as follows. Catalyzes the GTP-dependent ribosomal translocation step during translation elongation. During this step, the ribosome changes from the pre-translocational (PRE) to the post-translocational (POST) state as the newly formed A-site-bound peptidyl-tRNA and P-site-bound deacylated tRNA move to the P and E sites, respectively. Catalyzes the coordinated movement of the two tRNA molecules, the mRNA and conformational changes in the ribosome. The protein is Elongation factor G of Allorhizobium ampelinum (strain ATCC BAA-846 / DSM 112012 / S4) (Agrobacterium vitis (strain S4)).